We begin with the raw amino-acid sequence, 873 residues long: Zinc fingers and homeoboxes protein 1 (873 aa).

Thr36 is subject to Phosphothreonine. Residues 41–63 (AKAESVSSDEEVHGSVDSDNQQN) form a disordered region. 3 positions are modified to phosphoserine: Ser45, Ser47, and Ser48. Residues 50–63 (EEVHGSVDSDNQQN) are compositionally biased toward basic and acidic residues. C2H2-type zinc fingers lie at residues 70–93 (YECK…DSEH) and 102–125 (YVCV…LKYH). Residue Lys159 forms a Glycyl lysine isopeptide (Lys-Gly) (interchain with G-Cter in SUMO2) linkage. Residues 198 to 247 (VHHNSAEGTSEEKENGVKASQEENAESVSSSALESNTSTSTINRVHPSPA) form a disordered region. Position 202 is a phosphoserine (Ser202). Residues 223-238 (ESVSSSALESNTSTST) are compositionally biased toward low complexity. A required for dimerization region spans residues 272–432 (NSNLLPKVLI…QTNVQKSQVP (161 aa)). The required for interaction with NFYA stretch occupies residues 272-564 (NSNLLPKVLI…SQQKQSWNPF (293 aa)). Positions 284 to 346 (NSIPTYNAAL…LKHGVSWTPE (63 aa)) form a DNA-binding region, homeobox 1. The disordered stretch occupies residues 429–456 (SQVPAAQPATDTKPATAAVPSSPSVRPE). Glycyl lysine isopeptide (Lys-Gly) (interchain with G-Cter in SUMO2) cross-links involve residues Lys441 and Lys485. The segment at residues 464–526 (SFGIRAKKTK…YNQRNSKSNQ (63 aa)) is a DNA-binding region (homeobox 2). Disordered stretches follow at residues 541–568 (DSSD…PDFA), 627–668 (DEKI…CKKT), and 731–767 (SSSL…KRMN). The homeobox 3 DNA-binding region spans 569 to 630 (PQKFKEKTAE…KTKALKDEKI (62 aa)). Lys629 participates in a covalent cross-link: Glycyl lysine isopeptide (Lys-Gly) (interchain with G-Cter in SUMO2). Ser648 bears the Phosphoserine mark. The homeobox 4 DNA-binding region spans 660-722 (GTGKICKKTP…YAWKNGNLKW (63 aa)). Residues 734–768 (LNGLSSLRRRGRGRPKGRGRGRPRGRPRGGKRMNT) form a required for nuclear localization region. Over residues 740–764 (LRRRGRGRPKGRGRGRPRGRPRGGK) the composition is skewed to basic residues. Ser774 is modified (phosphoserine). Positions 777–832 (KFKTGTAILKDYYLKHKFLNEQDLDELVNRSHMGYEQVREWFAERQRRSELGIELF) form a DNA-binding region, homeobox 5. The segment at 829 to 873 (IELFEENEEEDEVVDDQEEDEEETDDSDTWEPPRHVKRKLSKSDD) is disordered. A compositionally biased stretch (acidic residues) spans 831-857 (LFEENEEEDEVVDDQEEDEEETDDSDT). A required for repressor activity region spans residues 831-873 (LFEENEEEDEVVDDQEEDEEETDDSDTWEPPRHVKRKLSKSDD). The span at 863–873 (HVKRKLSKSDD) shows a compositional bias: basic residues.

The protein belongs to the ZHX family. Forms homodimers. Heterodimer (via HD1 domain) with ZHX2 (via HD1 domain). Also forms a heterodimer with ZHX3 which is a prerequisite for repressor activity. Interacts with ATF7IP and NFYA. Interacts (via homeobox domains) with DNMT3B (via PWWP domain). Widely expressed with highest levels in brain.

The protein resides in the nucleus. Acts as a transcriptional repressor. Increases DNMT3B-mediated repressive transcriptional activity when DNMT3B is tethered to DNA. May link molecule between DNMT3B and other co-repressor proteins. This is Zinc fingers and homeoboxes protein 1 (Zhx1) from Mus musculus (Mouse).